The primary structure comprises 930 residues: Type I restriction enzyme SsaAORF53P endonuclease subunit (930 aa).

Positions 254–418 (HQATETSNNG…DGRSTADIFG (165 aa)) constitute a Helicase ATP-binding domain. 268-274 (TTGSGKT) provides a ligand contact to ATP.

The protein belongs to the HsdR family. In terms of assembly, the type I restriction/modification system is composed of three polypeptides R, M and S.

The enzyme catalyses Endonucleolytic cleavage of DNA to give random double-stranded fragments with terminal 5'-phosphates, ATP is simultaneously hydrolyzed.. Its function is as follows. The restriction (R) subunit of a type I restriction enzyme that recognizes an undetermined sequence and cleaves a random distance away. Subunit R is required for both nuclease and ATPase activities, but not for modification. After locating a non-methylated recognition site, the enzyme complex serves as a molecular motor that translocates DNA in an ATP-dependent manner until a collision occurs that triggers cleavage. This chain is Type I restriction enzyme SsaAORF53P endonuclease subunit, found in Staphylococcus saprophyticus subsp. saprophyticus (strain ATCC 15305 / DSM 20229 / NCIMB 8711 / NCTC 7292 / S-41).